A 191-amino-acid chain; its full sequence is Fe/S biogenesis protein NfuA (191 aa).

Cysteine 149 and cysteine 152 together coordinate [4Fe-4S] cluster.

The protein belongs to the NfuA family. In terms of assembly, homodimer. It depends on [4Fe-4S] cluster as a cofactor.

Involved in iron-sulfur cluster biogenesis. Binds a 4Fe-4S cluster, can transfer this cluster to apoproteins, and thereby intervenes in the maturation of Fe/S proteins. Could also act as a scaffold/chaperone for damaged Fe/S proteins. The sequence is that of Fe/S biogenesis protein NfuA from Salmonella choleraesuis (strain SC-B67).